Reading from the N-terminus, the 349-residue chain is Glycerol-3-phosphate dehydrogenase [NAD(P)+] (349 aa).

NADPH contacts are provided by Ser12, Trp13, and Lys107. Positions 107, 138, and 140 each coordinate sn-glycerol 3-phosphate. Position 142 (Ala142) interacts with NADPH. Sn-glycerol 3-phosphate is bound by residues Lys193, Asp246, Ser256, Arg257, and Asn258. Lys193 functions as the Proton acceptor in the catalytic mechanism. NADPH is bound at residue Arg257. NADPH contacts are provided by Val281 and Glu283.

This sequence belongs to the NAD-dependent glycerol-3-phosphate dehydrogenase family.

It is found in the cytoplasm. The catalysed reaction is sn-glycerol 3-phosphate + NAD(+) = dihydroxyacetone phosphate + NADH + H(+). It catalyses the reaction sn-glycerol 3-phosphate + NADP(+) = dihydroxyacetone phosphate + NADPH + H(+). Its pathway is membrane lipid metabolism; glycerophospholipid metabolism. In terms of biological role, catalyzes the reduction of the glycolytic intermediate dihydroxyacetone phosphate (DHAP) to sn-glycerol 3-phosphate (G3P), the key precursor for phospholipid synthesis. This chain is Glycerol-3-phosphate dehydrogenase [NAD(P)+], found in Pelotomaculum thermopropionicum (strain DSM 13744 / JCM 10971 / SI).